Reading from the N-terminus, the 446-residue chain is MEKLKILNLNFSFQRAAHYHINGGMLLMGVVLLAMFLANSPWGDIYASFWNYEVHLQIGEFNFFSHNGHHMTLMTFINDALMAVFFFSVGLEIKREILVGELSSFRQALLPIVAACGGMLVPVLIYYFMTAGTPAQSGLAIPMATDIAFSLGVLSLFGKRVPLSLKVFLTAFAVVDDIGGILVIALFYTSHLSVNYLIASAGILLILCGGNFFRVHNRWFYIFWGVIMWYLFLQSGIHATIAGVVAAFTVPATPHYKIGKYINRIRENIAVFPASDKESVVLSKMQINVLKSIESSSDRVISPLQSLEDSLHGMVNYIILPLFAFANAGVSLTADHGGLEVGMATWAVLAGLLAGKFAGIYFFTWLVIKMGFAGLLKGMTWVNLTGICLLGGIGFTVSLFIANLSFGDSPVLLTQAKMGVILGTVLAGVLAYLVLQFALPKQPAQE.

A run of 11 helical transmembrane segments spans residues 23 to 43 (GGML…SPWG), 73 to 93 (LMTF…GLEI), 109 to 129 (LLPI…YYFM), 138 to 158 (GLAI…SLFG), 167 to 187 (VFLT…IALF), 193 to 213 (SVNY…GNFF), 219 to 239 (WFYI…GIHA), 314 to 334 (MVNY…SLTA), 348 to 368 (VLAG…WLVI), 381 to 401 (WVNL…SLFI), and 419 to 439 (GVIL…QFAL).

It belongs to the NhaA Na(+)/H(+) (TC 2.A.33) antiporter family.

It is found in the cell inner membrane. The catalysed reaction is Na(+)(in) + 2 H(+)(out) = Na(+)(out) + 2 H(+)(in). Na(+)/H(+) antiporter that extrudes sodium in exchange for external protons. This Phocaeicola vulgatus (strain ATCC 8482 / DSM 1447 / JCM 5826 / CCUG 4940 / NBRC 14291 / NCTC 11154) (Bacteroides vulgatus) protein is Na(+)/H(+) antiporter NhaA.